Consider the following 742-residue polypeptide: Phosphoribosylformylglycinamidine synthase subunit PurL (742 aa).

The active site involves H53. Positions 56 and 95 each coordinate ATP. E97 is a binding site for Mg(2+). Substrate-binding positions include 98–101 and R120; that span reads SHNH. The active-site Proton acceptor is the H99. Residue D121 participates in Mg(2+) binding. Q244 serves as a coordination point for substrate. D274 provides a ligand contact to Mg(2+). Residue 318 to 320 participates in substrate binding; sequence ESQ. The ATP site is built by D501 and G538. N539 is a Mg(2+) binding site. S541 is a substrate binding site.

Belongs to the FGAMS family. As to quaternary structure, monomer. Part of the FGAM synthase complex composed of 1 PurL, 1 PurQ and 2 PurS subunits.

The protein resides in the cytoplasm. The catalysed reaction is N(2)-formyl-N(1)-(5-phospho-beta-D-ribosyl)glycinamide + L-glutamine + ATP + H2O = 2-formamido-N(1)-(5-O-phospho-beta-D-ribosyl)acetamidine + L-glutamate + ADP + phosphate + H(+). Its pathway is purine metabolism; IMP biosynthesis via de novo pathway; 5-amino-1-(5-phospho-D-ribosyl)imidazole from N(2)-formyl-N(1)-(5-phospho-D-ribosyl)glycinamide: step 1/2. Functionally, part of the phosphoribosylformylglycinamidine synthase complex involved in the purines biosynthetic pathway. Catalyzes the ATP-dependent conversion of formylglycinamide ribonucleotide (FGAR) and glutamine to yield formylglycinamidine ribonucleotide (FGAM) and glutamate. The FGAM synthase complex is composed of three subunits. PurQ produces an ammonia molecule by converting glutamine to glutamate. PurL transfers the ammonia molecule to FGAR to form FGAM in an ATP-dependent manner. PurS interacts with PurQ and PurL and is thought to assist in the transfer of the ammonia molecule from PurQ to PurL. This Limosilactobacillus reuteri (strain DSM 20016) (Lactobacillus reuteri) protein is Phosphoribosylformylglycinamidine synthase subunit PurL.